A 374-amino-acid polypeptide reads, in one-letter code: Chaperone protein DnaJ (374 aa).

A J domain is found at 5-70 (DYYEVLGVNL…RKRASYDQFG (66 aa)). Residues 133–210 (GLSRTIKVPT…CHGQGRQQQT (78 aa)) form a CR-type zinc finger. Zn(2+)-binding residues include Cys146, Cys149, Cys162, Cys165, Cys184, Cys187, Cys198, and Cys201. CXXCXGXG motif repeat units lie at residues 146–153 (CKTCNGSG), 162–169 (CPRCNGSG), 184–191 (CSVCRGRG), and 198–205 (CTDCHGQG).

Belongs to the DnaJ family. In terms of assembly, homodimer. It depends on Zn(2+) as a cofactor.

Its subcellular location is the cytoplasm. Functionally, participates actively in the response to hyperosmotic and heat shock by preventing the aggregation of stress-denatured proteins and by disaggregating proteins, also in an autonomous, DnaK-independent fashion. Unfolded proteins bind initially to DnaJ; upon interaction with the DnaJ-bound protein, DnaK hydrolyzes its bound ATP, resulting in the formation of a stable complex. GrpE releases ADP from DnaK; ATP binding to DnaK triggers the release of the substrate protein, thus completing the reaction cycle. Several rounds of ATP-dependent interactions between DnaJ, DnaK and GrpE are required for fully efficient folding. Also involved, together with DnaK and GrpE, in the DNA replication of plasmids through activation of initiation proteins. This is Chaperone protein DnaJ from Coxiella burnetii (strain RSA 331 / Henzerling II).